A 148-amino-acid polypeptide reads, in one-letter code: MLQNYAIVLGMAVAVAIWYFFKIEEEAPPGPNPPKPDPPKPDPPKMHMPKKKPHWMDPHLTGSQTVQYSRNRSMGDPIRGDLPIIPRDDGWFSTAANPAHTLHAGALSMIAPASTGGGLTVNKLISAYADKGNAMSGRHNSPSYYGSS.

Residues 1–21 (MLQNYAIVLGMAVAVAIWYFF) traverse the membrane as a helical segment. The disordered stretch occupies residues 27–61 (APPGPNPPKPDPPKPDPPKMHMPKKKPHWMDPHLT).

It localises to the host membrane. This is an uncharacterized protein from Frog virus 3 (isolate Goorha) (FV-3).